The following is a 533-amino-acid chain: MHRRDFLKLTAALGAATSLPLWSRAALAADFSPLPIPPLLQPDANGKINLNIQTGSVVWLPSTATQTWGYNGNLLGPAIRLQRGKAVTIDITNALPEATTVHWHGLEIPGEVDGGPQALIQPGAKRQVTFAVEQPAATCWFHPHTHSKTGHQVAMGLGGLVLIDDSDSETLPLPKQWGVDDIPVILQDKLLDKHGQVDYQLDVMTAAVGWFGDRMLTNGVPYPQQITPRGWVRLRLLNGCNARSLNLALSDGRPMYVIASDGGLLAEPVVVRELPILMGERFEVLVDTRDGQSLDLVTLPVTQMGMTLAPFDQPLPVLRIQPSLAIGSQVLPESLVVIPELADVTGVQERWFQLMMDPKLDMLGMQALVARYGMKAMAGMNMNHGDMGAMDHGNRPDMSQGKMKGMDHGTMNGAPAFNFSHANRINGKAFSMTEPAFDAKQGKYEKWTISGEGDMMLHPFHVHGTQFRILTENGKPPAEHRRGWKDIVRVEGARSEILVRFNYLAPASTPYMAHCHLLEHEDTGMMLGFTVSA.

Residues 1–28 (MHRRDFLKLTAALGAATSLPLWSRAALA) constitute a signal peptide (tat-type signal). Plastocyanin-like domains lie at 53-166 (QTGS…IDDS), 221-290 (PYPQ…DTRD), and 416-532 (AFNF…FTVS). Residues H102, H104, H142, and H144 each coordinate Cu cation. Cu cation-binding residues include H458, H461, H463, H514, C515, H516, and H520.

This sequence belongs to the multicopper oxidase family. In terms of assembly, monomer. The cofactor is Cu cation. Post-translationally, predicted to be exported by the Tat system. The position of the signal peptide cleavage has not been experimentally proven.

It localises to the periplasm. The enzyme catalyses 4 Cu(+) + O2 + 4 H(+) = 4 Cu(2+) + 2 H2O. Multicopper oxidase involved in copper homeostasis and copper tolerance under aerobic conditions. Is responsible for the oxidation of Cu(+) to the less harmful Cu(2+) in the periplasm, thereby preventing Cu(+) from entering the cytoplasm. The protein is Multicopper oxidase CueO (cueO) of Yersinia pestis.